Reading from the N-terminus, the 63-residue chain is Conotoxin Pu5.4 (63 aa).

The signal sequence occupies residues 1 to 22; the sequence is MRCVPVFVILLLLIASTPSVDA. Residues 23–50 constitute a propeptide that is removed on maturation; that stretch reads TQKTKDDMSLASFHDNAKRFLQTLRNTR. The residue at position 62 (Trp62) is a Tryptophan amide.

The protein belongs to the conotoxin T superfamily. Contains 2 disulfide bonds that can be either 'C1-C3, C2-C4' or 'C1-C4, C2-C3', since these disulfide connectivities have been observed for conotoxins with cysteine framework V (for examples, see AC P0DQQ7 and AC P81755). In terms of tissue distribution, expressed by the venom duct.

It localises to the secreted. The chain is Conotoxin Pu5.4 from Conus pulicarius (Flea-bitten cone).